The primary structure comprises 303 residues: UDP-3-O-acyl-N-acetylglucosamine deacetylase (303 aa).

3 residues coordinate Zn(2+): His-78, His-237, and Asp-241. The active-site Proton donor is the His-264.

This sequence belongs to the LpxC family. Zn(2+) is required as a cofactor.

The enzyme catalyses a UDP-3-O-[(3R)-3-hydroxyacyl]-N-acetyl-alpha-D-glucosamine + H2O = a UDP-3-O-[(3R)-3-hydroxyacyl]-alpha-D-glucosamine + acetate. It participates in glycolipid biosynthesis; lipid IV(A) biosynthesis; lipid IV(A) from (3R)-3-hydroxytetradecanoyl-[acyl-carrier-protein] and UDP-N-acetyl-alpha-D-glucosamine: step 2/6. Its function is as follows. Catalyzes the hydrolysis of UDP-3-O-myristoyl-N-acetylglucosamine to form UDP-3-O-myristoylglucosamine and acetate, the committed step in lipid A biosynthesis. The protein is UDP-3-O-acyl-N-acetylglucosamine deacetylase of Coxiella burnetii (strain CbuG_Q212) (Coxiella burnetii (strain Q212)).